The sequence spans 46 residues: Myoregulin (46 aa).

Topologically, residues 1 to 21 (MSGKSWVLISTTSPQSLEDEI) are cytoplasmic. The chain crosses the membrane as a helical span at residues 22–42 (LGRLLKILFVLFVDLMSIMYV). The Lumenal segment spans residues 43-46 (VITS).

Homooligomer. Monomer. Interacts with ATP2A1/SERCA1. Interacts as a monomer with ATP2A2/SERCA2; the interaction inhibits ATP2A2 activity. Specifically expressed in all skeletal muscles. Detected in both fast- and slow-type skeletal muscle. Not expressed in cardiac or smooth muscles.

Its subcellular location is the sarcoplasmic reticulum membrane. Inhibits the activity of ATP2A1/SERCA1 ATPase in sarcoplasmic reticulum by decreasing the apparent affinity of the ATPase for Ca(2+), thereby acting as a key regulator of skeletal muscle activity. Its high expression in adult skeletal muscle, suggests that it constitutes the predominant regulator of ATP2A1/SERCA1 in adult skeletal muscle. Also inhibits the activity of ATP2A2/SERCA2 and ATP2A3/SERCA3. The chain is Myoregulin from Mus musculus (Mouse).